We begin with the raw amino-acid sequence, 353 residues long: Variable large protein 12 (353 aa).

Residues 1–18 form the signal peptide; it reads MRKRISAIIMTLFMVLAS. A lipid anchor (N-palmitoyl cysteine) is attached at C19. A lipid anchor (S-diacylglycerol cysteine) is attached at C19.

The protein belongs to the variable large protein (Vlp) family. Beta subfamily.

The protein resides in the cell outer membrane. Functionally, the Vlp and Vsp proteins are antigenically distinct proteins, only one vlp or vsp gene is transcriptionally active at any one time. Switching between these genes is a mechanism of host immune response evasion. The polypeptide is Variable large protein 12 (Borrelia hermsii).